The chain runs to 432 residues: MAVIESVYARQILDSRGNPTVEVVLDTDDGAQGLGLVPSGASTGEAEAWERRDGDKSVYQGKGVLNAVKAVNEEIAPKVIGMDASDQRALDETMIELDGTPNKGRLGANAILGVSLAALYASAESADQPLYRYIGGTNGHILPVPNMNIMNGGAHADFATDIQEYMISPYGFNTYSEALQAGVEVYHTLKNVLKKQGLNTGLGDEGGFAPKMKSNKDSLNYIMDAISAAGYEPGKQIGISLDVASSEFYNKETGKYHFEGDDREAGYMLDFYENLINEYPIVSIEDPFQEEGWDDWAAITAKLGDRLQFVGDDLLVTNPARLAKGIKLGAANSLLVKLNQIGTVTETLDAIELATKNGFTSMVSHRSGETPDTTISDLAVAKNTGQIKTGAPARGERIAKYNRLLEIEEELGSTAQYAGYSAFKACKKYIAE.

Q163 is a binding site for (2R)-2-phosphoglycerate. E205 serves as the catalytic Proton donor. The Mg(2+) site is built by D242, E285, and D312. 4 residues coordinate (2R)-2-phosphoglycerate: K337, R366, S367, and K388. The active-site Proton acceptor is K337.

Belongs to the enolase family. The cofactor is Mg(2+).

It is found in the cytoplasm. It localises to the secreted. The protein localises to the cell surface. It carries out the reaction (2R)-2-phosphoglycerate = phosphoenolpyruvate + H2O. The protein operates within carbohydrate degradation; glycolysis; pyruvate from D-glyceraldehyde 3-phosphate: step 4/5. Its function is as follows. Catalyzes the reversible conversion of 2-phosphoglycerate (2-PG) into phosphoenolpyruvate (PEP). It is essential for the degradation of carbohydrates via glycolysis. This chain is Enolase, found in Bifidobacterium adolescentis (strain ATCC 15703 / DSM 20083 / NCTC 11814 / E194a).